Here is a 489-residue protein sequence, read N- to C-terminus: Probable guanine deaminase (489 aa).

Zn(2+) is bound by residues His100 and His102. Substrate-binding positions include 102–105 (HVSQ), 231–232 (RF), 258–261 (HLSE), and Asp348. 2 residues coordinate Zn(2+): His258 and Asp348.

It belongs to the metallo-dependent hydrolases superfamily. ATZ/TRZ family. It depends on Zn(2+) as a cofactor.

It localises to the cytoplasm. It catalyses the reaction guanine + H2O + H(+) = xanthine + NH4(+). The protein operates within purine metabolism; guanine degradation; xanthine from guanine: step 1/1. Functionally, catalyzes the hydrolytic deamination of guanine, producing xanthine and ammonia. This Saccharomyces cerevisiae (strain ATCC 204508 / S288c) (Baker's yeast) protein is Probable guanine deaminase (GUD1).